The chain runs to 149 residues: Transcriptional repressor NrdR (149 aa).

The segment at 3–34 (CPYCSYEESKVVDSRSAEDYNAIRRRRECLRC) is a zinc-finger region. One can recognise an ATP-cone domain in the interval 49–139 (ILVIKKDLSR…VYRQFKDINT (91 aa)).

Belongs to the NrdR family. Zn(2+) is required as a cofactor.

In terms of biological role, negatively regulates transcription of bacterial ribonucleotide reductase nrd genes and operons by binding to NrdR-boxes. This chain is Transcriptional repressor NrdR, found in Clostridium perfringens (strain ATCC 13124 / DSM 756 / JCM 1290 / NCIMB 6125 / NCTC 8237 / Type A).